The following is a 173-amino-acid chain: Crossover junction endodeoxyribonuclease RuvC (173 aa).

Residues aspartate 8, glutamate 67, and aspartate 139 contribute to the active site. Mg(2+) contacts are provided by aspartate 8, glutamate 67, and aspartate 139.

Belongs to the RuvC family. In terms of assembly, homodimer which binds Holliday junction (HJ) DNA. The HJ becomes 2-fold symmetrical on binding to RuvC with unstacked arms; it has a different conformation from HJ DNA in complex with RuvA. In the full resolvosome a probable DNA-RuvA(4)-RuvB(12)-RuvC(2) complex forms which resolves the HJ. The cofactor is Mg(2+).

It is found in the cytoplasm. It carries out the reaction Endonucleolytic cleavage at a junction such as a reciprocal single-stranded crossover between two homologous DNA duplexes (Holliday junction).. Its function is as follows. The RuvA-RuvB-RuvC complex processes Holliday junction (HJ) DNA during genetic recombination and DNA repair. Endonuclease that resolves HJ intermediates. Cleaves cruciform DNA by making single-stranded nicks across the HJ at symmetrical positions within the homologous arms, yielding a 5'-phosphate and a 3'-hydroxyl group; requires a central core of homology in the junction. The consensus cleavage sequence is 5'-(A/T)TT(C/G)-3'. Cleavage occurs on the 3'-side of the TT dinucleotide at the point of strand exchange. HJ branch migration catalyzed by RuvA-RuvB allows RuvC to scan DNA until it finds its consensus sequence, where it cleaves and resolves the cruciform DNA. This chain is Crossover junction endodeoxyribonuclease RuvC, found in Vibrio cholerae serotype O1 (strain ATCC 39541 / Classical Ogawa 395 / O395).